The sequence spans 417 residues: Echinulin prenyltransferase 1 (417 aa).

Residues Arg-90, Lys-179, Tyr-181, Lys-248, Tyr-250, Tyr-333, Tyr-398, and Tyr-402 each coordinate dimethylallyl diphosphate.

The protein belongs to the tryptophan dimethylallyltransferase family.

The enzyme catalyses cyclo(L-tryptophyl-L-alanyl) + dimethylallyl diphosphate = preechinulin + diphosphate. Its pathway is secondary metabolite biosynthesis. It functions in the pathway alkaloid biosynthesis. Prenyltransferase; part of the gene cluster that mediates the biosynthesis of echinulin family alkaloid. The pathway begins with the biosynthesis of the cyclic dipeptide cyclo-L-Trp-L-Ala (cyclo-TA) by the NRPS echPS via condensation of L-alanine and L-tryptophan. The prenyltransferase echPT1 then catalyzes the first prenylation step, a reverse prenylation reaction at C2, to yield preechinulin. Preechinulin is the substrate of the cytochrome P450 monooxygenase echP450 that catalyzes the formation of the double bond between C10 and C11 to produce neoechulin A. The unique prenyltransferase echPT2 functions as a competitive enzyme with echP450 for preechinulin metabolization and uses preechinulin for effective regiospecific prenylations. Preechinulin is prenylated by echPT2 at C5 or C7. C7-prenylation leads to accumulation of tardioxopiperazine B without further modification by echPT2. In contrast, the C5-prenylated tardioxopiperazine A can be prenylated again by echPT2, predominantly at C7 to form echinulin or less frequently at C4 to give variecolorin L. EchPT2 also accepts neoechilunin A to produce varlecolorin G (prenylation at C5) or isoechinulin A (prenylation at C7). EchPT2 further converts isoechinulin A into dehydroechinulin. Moreover, a yet unidentified enzyme can also convert neoechilunin A into neoechilunin B by introducing a double bond between positions C14 and C17 and thus provides a further substrate to echPT2 for C5 and C7 prenylation. This is Echinulin prenyltransferase 1 from Aspergillus ruber (Eurotium rubrum).